Here is a 522-residue protein sequence, read N- to C-terminus: Lysine--tRNA ligase (522 aa).

The short motif at 44–52 (PSGLPHIGT) is the 'HIGH' region element. The short motif at 290 to 294 (KISKS) is the 'KMSKS' region element. Lys293 contacts ATP.

It belongs to the class-I aminoacyl-tRNA synthetase family.

It is found in the cytoplasm. The catalysed reaction is tRNA(Lys) + L-lysine + ATP = L-lysyl-tRNA(Lys) + AMP + diphosphate. This Rickettsia rickettsii (strain Iowa) protein is Lysine--tRNA ligase.